The primary structure comprises 106 residues: Small ribosomal subunit protein mS33 (106 aa).

Ser2 bears the N-acetylserine mark. Over residues 85-94 the composition is skewed to basic residues; it reads LKKLRGKVKP. Residues 85-106 form a disordered region; the sequence is LKKLRGKVKPRKGEGKRAAKKK. Positions 95–106 are enriched in basic and acidic residues; sequence RKGEGKRAAKKK.

The protein belongs to the mitochondrion-specific ribosomal protein mS33 family. As to quaternary structure, component of the mitochondrial ribosome small subunit (28S) which comprises a 12S rRNA and about 30 distinct proteins.

The protein resides in the mitochondrion. This Bos taurus (Bovine) protein is Small ribosomal subunit protein mS33.